A 288-amino-acid polypeptide reads, in one-letter code: MSGALNMTLDEIVKRGKTARSGGRGISRGRGRGRGGGGRGAGPARRGPLAVNARPSSFTINKPVRRVRSLPWQSGLFEDGLRAAGASGVEVGTRLHVTNLDQGVTNEDIRELFSEIGEVERYAIHYDKNGRPSGTAEVVYPRRSDAFQALKKYNNVLLDGRPMRLEILGGNNSSEAPLSGRVNVNVTGLNGRLKRTVVIQQGGGGRGRVRGGRGGRGPAPTVSRRLPIHNQQGGGMRGGRGGFRARGRGNGGRGRGGGRGNGKKPVEKSAADLDKDLESYHADAMNTS.

Residues 1–55 form a disordered region; that stretch reads MSGALNMTLDEIVKRGKTARSGGRGISRGRGRGRGGGGRGAGPARRGPLAVNARP. Ser-2 carries the post-translational modification N-acetylserine. In terms of domain architecture, RRM spans 93-170; sequence TRLHVTNLDQ…RPMRLEILGG (78 aa). The segment at 201-288 is disordered; that stretch reads QGGGGRGRVR…SYHADAMNTS (88 aa). Gly residues predominate over residues 232 to 260; the sequence is QGGGMRGGRGGFRARGRGNGGRGRGGGRG. Basic and acidic residues predominate over residues 264–281; sequence KPVEKSAADLDKDLESYH.

It belongs to the ALYREF family. Interacts with PARP1. Interacts with EIF4A3.

The protein resides in the nucleus. The protein localises to the nucleoplasm. It is found in the nucleolus. Its function is as follows. Export adapter involved in nuclear export of spliced and unspliced mRNA. Plays a role in disease resistance. Mediates multiple defense responses triggered by NEP1, including stomatal closure, hypersensitive cell death (HCD) and defense-related gene expression. The protein is THO complex subunit 4D of Arabidopsis thaliana (Mouse-ear cress).